Here is a 104-residue protein sequence, read N- to C-terminus: MHPSEMQRKAPPRRRRHRNRAPLTHKMNKMVTSEQMKLPSTKKAEPPTWAQLKKLTQLATKYLENTKVTQTPESMLLAALMIVSMVSAGVPNSSEETATIENGP.

The disordered stretch occupies residues 1-48 (MHPSEMQRKAPPRRRRHRNRAPLTHKMNKMVTSEQMKLPSTKKAEPPT). The span at 10–20 (APPRRRRHRNR) shows a compositional bias: basic residues. The Nuclear localization signal signature appears at 13-20 (RRRRHRNR). A Nuclear export signal motif is present at residues 49 to 58 (WAQLKKLTQL).

As to quaternary structure, forms homodimers, homotrimers, and homotetramers via a C-terminal domain. Associates with XPO1 and with ZNF145.

The protein localises to the cytoplasm. Its subcellular location is the nucleus. It localises to the nucleolus. Functionally, retroviral replication requires the nuclear export and translation of unspliced, singly-spliced and multiply-spliced derivatives of the initial genomic transcript. Rec interacts with a highly structured RNA element (RcRE) present in the viral 3'LTR and recruits the cellular nuclear export machinery. This permits export to the cytoplasm of unspliced genomic or incompletely spliced subgenomic viral transcripts. This chain is Endogenous retrovirus group K member 21 Rec protein (ERVK-21), found in Homo sapiens (Human).